Reading from the N-terminus, the 214-residue chain is MKRIDFTLYAITDRSFIKGMDIAEAVEIAIKNGVTVVQLREKDISSREFYEIALKVKEVTRKYNVPLIINDRVDIALAVDAEGVHVGPDDLPVGVVRRILGPDKIVGGSAYSVEEALKAEKEGADYIGAGSVFAQPVKPEAEVIGIEGVRKIKEAVNIPVVAIGGVNKTNAYEVILHSGVDGISAIAGIFDGDIEANTKDMLREIRRAFKERGK.

Residues 38 to 42 (QLREK) and N70 contribute to the 4-amino-2-methyl-5-(diphosphooxymethyl)pyrimidine site. Mg(2+) is bound by residues D71 and D90. 2 residues coordinate 4-amino-2-methyl-5-(diphosphooxymethyl)pyrimidine: S109 and K138. G165 contributes to the 2-[(2R,5Z)-2-carboxy-4-methylthiazol-5(2H)-ylidene]ethyl phosphate binding site.

The protein belongs to the thiamine-phosphate synthase family. Mg(2+) serves as cofactor.

It carries out the reaction 2-[(2R,5Z)-2-carboxy-4-methylthiazol-5(2H)-ylidene]ethyl phosphate + 4-amino-2-methyl-5-(diphosphooxymethyl)pyrimidine + 2 H(+) = thiamine phosphate + CO2 + diphosphate. The enzyme catalyses 2-(2-carboxy-4-methylthiazol-5-yl)ethyl phosphate + 4-amino-2-methyl-5-(diphosphooxymethyl)pyrimidine + 2 H(+) = thiamine phosphate + CO2 + diphosphate. The catalysed reaction is 4-methyl-5-(2-phosphooxyethyl)-thiazole + 4-amino-2-methyl-5-(diphosphooxymethyl)pyrimidine + H(+) = thiamine phosphate + diphosphate. It participates in cofactor biosynthesis; thiamine diphosphate biosynthesis; thiamine phosphate from 4-amino-2-methyl-5-diphosphomethylpyrimidine and 4-methyl-5-(2-phosphoethyl)-thiazole: step 1/1. Its function is as follows. Condenses 4-methyl-5-(beta-hydroxyethyl)thiazole monophosphate (THZ-P) and 2-methyl-4-amino-5-hydroxymethyl pyrimidine pyrophosphate (HMP-PP) to form thiamine monophosphate (TMP). The polypeptide is Thiamine-phosphate synthase (Caldanaerobacter subterraneus subsp. tengcongensis (strain DSM 15242 / JCM 11007 / NBRC 100824 / MB4) (Thermoanaerobacter tengcongensis)).